A 363-amino-acid chain; its full sequence is Methylthioribose-1-phosphate isomerase (363 aa).

Asp253 (proton donor) is an active-site residue.

This sequence belongs to the eIF-2B alpha/beta/delta subunits family. MtnA subfamily.

The protein localises to the cytoplasm. The protein resides in the nucleus. The enzyme catalyses 5-(methylsulfanyl)-alpha-D-ribose 1-phosphate = 5-(methylsulfanyl)-D-ribulose 1-phosphate. The protein operates within amino-acid biosynthesis; L-methionine biosynthesis via salvage pathway; L-methionine from S-methyl-5-thio-alpha-D-ribose 1-phosphate: step 1/6. In terms of biological role, catalyzes the interconversion of methylthioribose-1-phosphate (MTR-1-P) into methylthioribulose-1-phosphate (MTRu-1-P). The protein is Methylthioribose-1-phosphate isomerase of Drosophila grimshawi (Hawaiian fruit fly).